Reading from the N-terminus, the 589-residue chain is Early growth response protein 4 (589 aa).

Disordered stretches follow at residues 29 to 101, 383 to 411, and 436 to 466; these read GSAL…HSRR, AEGLPGLLTPPSGEGGSSGDGGEFLASTQ, and PGSSGVAAPPVPPPPPTPFPQAKARRKGRRG. Positions 76–86 are enriched in pro residues; it reads PLPPASPPPAR. The segment covering 92–101 has biased composition (basic residues); that stretch reads ARPRAPHSRR. Positions 395–404 are enriched in gly residues; the sequence is GEGGSSGDGG. The span at 444-454 shows a compositional bias: pro residues; sequence PPVPPPPPTPF. C2H2-type zinc fingers lie at residues 483–507, 513–535, and 541–563; these read FACPVESCVRSFARSDELNRHLRIH, FQCRICLRNFSRSDHLTTHVRTH, and FACDVCGRRFARSDEKKRHSKVH.

It belongs to the EGR C2H2-type zinc-finger protein family.

The protein resides in the nucleus. In terms of biological role, transcriptional regulator. Recognizes and binds to the DNA sequence 5'-GCGGGGGCG-3' (GSG). Activates the transcription of target genes whose products are required for mitogenesis and differentiation. The sequence is that of Early growth response protein 4 (EGR4) from Homo sapiens (Human).